The sequence spans 137 residues: Nucleoside diphosphate kinase (137 aa).

ATP is bound by residues K9, F57, R85, T91, R102, and N112. The active-site Pros-phosphohistidine intermediate is the H115.

This sequence belongs to the NDK family. Homotetramer. Mg(2+) serves as cofactor.

Its subcellular location is the cytoplasm. The catalysed reaction is a 2'-deoxyribonucleoside 5'-diphosphate + ATP = a 2'-deoxyribonucleoside 5'-triphosphate + ADP. It catalyses the reaction a ribonucleoside 5'-diphosphate + ATP = a ribonucleoside 5'-triphosphate + ADP. Functionally, major role in the synthesis of nucleoside triphosphates other than ATP. The ATP gamma phosphate is transferred to the NDP beta phosphate via a ping-pong mechanism, using a phosphorylated active-site intermediate. This chain is Nucleoside diphosphate kinase, found in Geobacter sulfurreducens (strain ATCC 51573 / DSM 12127 / PCA).